Reading from the N-terminus, the 31-residue chain is Kalata-B9 (31 aa).

The cyclopeptide (Gly-Asp) cross-link spans 1 to 31 (GSVFNCGETCVLGTCYTPGCTCNTYRVCTKD). Cystine bridges form between C6–C20, C10–C22, and C15–C28.

The protein belongs to the cyclotide family. Bracelet subfamily. This peptide occurs in both cyclic and linear forms.

Its function is as follows. Probably participates in a plant defense mechanism. In Oldenlandia affinis, this protein is Kalata-B9.